We begin with the raw amino-acid sequence, 157 residues long: Peptide methionine sulfoxide reductase MsrA (157 aa).

Residue Cys-10 is part of the active site.

Belongs to the MsrA Met sulfoxide reductase family.

It carries out the reaction L-methionyl-[protein] + [thioredoxin]-disulfide + H2O = L-methionyl-(S)-S-oxide-[protein] + [thioredoxin]-dithiol. The enzyme catalyses [thioredoxin]-disulfide + L-methionine + H2O = L-methionine (S)-S-oxide + [thioredoxin]-dithiol. Has an important function as a repair enzyme for proteins that have been inactivated by oxidation. Catalyzes the reversible oxidation-reduction of methionine sulfoxide in proteins to methionine. This Clostridium botulinum (strain Hall / ATCC 3502 / NCTC 13319 / Type A) protein is Peptide methionine sulfoxide reductase MsrA.